Consider the following 199-residue polypeptide: MRIILLGPPGAGKGTQSARIVEQFGIPQLSTGDMLRAAVAARTPVGLQAKSIMESGGLVPDEVVVGIVADRIDEADARKGFILDGFPRTVAQAKALDAMLAAKGLSLDAVIEFRVDEEALLGRIAKRAAETLARGEAVRKDDTPEVFKTRLDAYRSQTAPVSDYYAQTGLLRPIDGMAPIDDVSRAVEVLLRGLQPVSA.

10–15 (GAGKGT) contributes to the ATP binding site. An NMP region spans residues 30–59 (STGDMLRAAVAARTPVGLQAKSIMESGGLV). AMP is bound by residues Thr31, Arg36, 57–59 (GLV), 85–88 (GFPR), and Gln92. The interval 126-142 (KRAAETLARGEAVRKDD) is LID. Arg127 contacts ATP. AMP contacts are provided by Arg139 and Arg150. Residue Ala178 participates in ATP binding.

It belongs to the adenylate kinase family. In terms of assembly, monomer.

The protein localises to the cytoplasm. It carries out the reaction AMP + ATP = 2 ADP. It functions in the pathway purine metabolism; AMP biosynthesis via salvage pathway; AMP from ADP: step 1/1. In terms of biological role, catalyzes the reversible transfer of the terminal phosphate group between ATP and AMP. Plays an important role in cellular energy homeostasis and in adenine nucleotide metabolism. The sequence is that of Adenylate kinase from Methylobacterium nodulans (strain LMG 21967 / CNCM I-2342 / ORS 2060).